A 301-amino-acid polypeptide reads, in one-letter code: Ornithine carbamoyltransferase (301 aa).

Carbamoyl phosphate is bound by residues Arg-100 and 127 to 130; that span reads HPCQ. Residues Asn-158, Asp-221, and 225-226 contribute to the L-ornithine site; that span reads SM. Carbamoyl phosphate is bound by residues Cys-260 and Arg-288.

This sequence belongs to the aspartate/ornithine carbamoyltransferase superfamily. OTCase family. As to quaternary structure, homododecamer.

It is found in the cytoplasm. It carries out the reaction carbamoyl phosphate + L-ornithine = L-citrulline + phosphate + H(+). The protein operates within amino-acid biosynthesis; L-arginine biosynthesis; L-arginine from L-ornithine and carbamoyl phosphate: step 1/3. Functionally, reversibly catalyzes the transfer of the carbamoyl group from carbamoyl phosphate (CP) to the N(epsilon) atom of ornithine (ORN) to produce L-citrulline. This Moritella profunda protein is Ornithine carbamoyltransferase (argF).